A 388-amino-acid chain; its full sequence is Type II secretion system protein F (388 aa).

Positions 1–28 (MTEGDSARQVRQQLREQGLTPLEVNETT) are disordered. The Cytoplasmic segment spans residues 1-153 (MTEGDSARQV…HMRTKLLQAM (153 aa)). Ca(2+)-binding residues include Glu-79, Asn-133, and Asp-137. Residues 154 to 174 (IYPIVLTLVAVGVISILLTAV) form a helical membrane-spanning segment. At 175–205 (VPKVVAQFEHMGQQLPATTRFLIGTSELMQH) the chain is on the periplasmic side. A helical membrane pass occupies residues 206-226 (YGLWFLLLLFIGGFVWRWWLT). Residues 227–350 (DEKRRRHWHQ…QDREFETQVN (124 aa)) are Cytoplasmic-facing. A helical membrane pass occupies residues 351-371 (IALGVFEPLLVVSMAGVVLFI). The Periplasmic portion of the chain corresponds to 372–388 (VMSILQPILELNNMVNL).

Belongs to the GSP F family. Type II secretion system is composed of four main components: the outer membrane complex, the inner membrane complex, the cytoplasmic secretion ATPase and the periplasm-spanning pseudopilus. Homodimer. Interacts with ExeE and ExeL components.

It localises to the cell inner membrane. Component of the type II secretion system inner membrane complex required for the energy-dependent secretion of extracellular factors such as proteases and toxins from the periplasm. The chain is Type II secretion system protein F (exeF) from Aeromonas hydrophila.